The chain runs to 214 residues: Thymidylate kinase (214 aa).

10 to 17 (GPDGAGKT) is a binding site for ATP.

It belongs to the thymidylate kinase family.

The catalysed reaction is dTMP + ATP = dTDP + ADP. Phosphorylation of dTMP to form dTDP in both de novo and salvage pathways of dTTP synthesis. The polypeptide is Thymidylate kinase (Latilactobacillus sakei subsp. sakei (strain 23K) (Lactobacillus sakei subsp. sakei)).